The primary structure comprises 160 residues: RNA pyrophosphohydrolase (160 aa).

Residues 10 to 154 enclose the Nudix hydrolase domain; the sequence is PYRKCVGVVL…KRDVYEQVFD (145 aa). The Nudix box signature appears at 44–65; the sequence is GGIEDGEDARTAALRELVEETG.

The protein belongs to the Nudix hydrolase family. RppH subfamily. Requires a divalent metal cation as cofactor.

Functionally, accelerates the degradation of transcripts by removing pyrophosphate from the 5'-end of triphosphorylated RNA, leading to a more labile monophosphorylated state that can stimulate subsequent ribonuclease cleavage. This is RNA pyrophosphohydrolase from Dinoroseobacter shibae (strain DSM 16493 / NCIMB 14021 / DFL 12).